The primary structure comprises 480 residues: Dimethyl-sulfide monooxygenase (480 aa).

Aspartate 58, threonine 104, histidine 154, tyrosine 158, and serine 230 together coordinate FMN. The interval 423–480 (QDSYKPGSLRRKLIGTNDGRVESTHPAAQYRDAYVGKESVADRTQPSPFANAKAPVAE) is disordered.

Belongs to the NtaA/SnaA/DszA monooxygenase family. In terms of assembly, heterodimer of 2 subunits, DmoA and DmoB. FMN serves as cofactor.

It catalyses the reaction dimethyl sulfide + NADH + O2 + H(+) = methanethiol + formaldehyde + NAD(+) + H2O. Inhibited by umbelliferone, 8-anilinonaphthalenesulfonate, a range of metal-chelating agents, and Hg(2+), Cd(2+) and Pb(2+) ions. Its function is as follows. Monooxygenase that mediates oxidation of dimethyl sulfide, the first step in dimethyl sulfide degradation pathway. Has much lower activity with diethyl sulfide and other short-chain alkyl methyl sulfides. The polypeptide is Dimethyl-sulfide monooxygenase (dmoA) (Hyphomicrobium sulfonivorans).